The chain runs to 61 residues: Large ribosomal subunit protein eL37 (61 aa).

Positions 19, 22, 34, and 37 each coordinate Zn(2+). The C4-type zinc finger occupies 19 to 37; it reads CRRCGRNSFNVRKGYCAAC.

The protein belongs to the eukaryotic ribosomal protein eL37 family. The cofactor is Zn(2+).

In terms of biological role, binds to the 23S rRNA. In Sulfurisphaera tokodaii (strain DSM 16993 / JCM 10545 / NBRC 100140 / 7) (Sulfolobus tokodaii), this protein is Large ribosomal subunit protein eL37 (rpl37e).